Consider the following 311-residue polypeptide: Glycerol-3-phosphate dehydrogenase [NAD(P)+] (311 aa).

Residues W11, R30, R31, and K95 each contribute to the NADPH site. Residues K95, G123, and S125 each coordinate sn-glycerol 3-phosphate. A127 is a binding site for NADPH. Residues K177, D230, S240, R241, and N242 each coordinate sn-glycerol 3-phosphate. K177 acts as the Proton acceptor in catalysis. An NADPH-binding site is contributed by R241. Positions 265 and 267 each coordinate NADPH.

The protein belongs to the NAD-dependent glycerol-3-phosphate dehydrogenase family.

Its subcellular location is the cytoplasm. It carries out the reaction sn-glycerol 3-phosphate + NAD(+) = dihydroxyacetone phosphate + NADH + H(+). The enzyme catalyses sn-glycerol 3-phosphate + NADP(+) = dihydroxyacetone phosphate + NADPH + H(+). Its pathway is membrane lipid metabolism; glycerophospholipid metabolism. Catalyzes the reduction of the glycolytic intermediate dihydroxyacetone phosphate (DHAP) to sn-glycerol 3-phosphate (G3P), the key precursor for phospholipid synthesis. The sequence is that of Glycerol-3-phosphate dehydrogenase [NAD(P)+] from Bartonella bacilliformis (strain ATCC 35685 / KC583 / Herrer 020/F12,63).